We begin with the raw amino-acid sequence, 471 residues long: 7-dehydrocholesterol reductase (471 aa).

Transmembrane regions (helical) follow at residues 36 to 56 (LVSVIFLLLFAPFIVYYFIMA), 95 to 115 (LYALWVSFQVLLYSWLPDFCH), 144 to 164 (LQAWLITHFLWFVNAYLLSWF), 173 to 193 (WIPLLWCANILGYAVSTFAMI), 233 to 253 (LFFNGRPGIVAWTLINLSFAA), 262 to 282 (VTNSMILVNVLQAIYVLDFFW), 302 to 322 (LGWGDCVWLPYLYTLQGLYLV), and 327 to 347 (QLSTPNALGVLLLGLVGYYIF). NADP(+) is bound by residues Lys354, Arg358, Leu391, Trp396, and 403 to 404 (NY). A helical transmembrane segment spans residues 416–436 (LACGGGHLLPYFYIIYMTILL). Residues Asp443, 447-451 (CANKY), and Tyr458 contribute to the NADP(+) site.

Belongs to the ERG4/ERG24 family. As to quaternary structure, interacts with DHCR24; this interaction regulates DHCR7 activity. Interacts with TMEM147. Highest expression is detected in liver, followed by kidney and brain.

The protein localises to the endoplasmic reticulum membrane. The catalysed reaction is cholesterol + NADP(+) = 7-dehydrocholesterol + NADPH + H(+). It carries out the reaction 7-dehydrodesmosterol + NADPH + H(+) = desmosterol + NADP(+). It catalyses the reaction 5,6alpha-epoxy-5alpha-cholestan-3beta-ol + H2O = 5alpha-cholestane-3beta,5,6beta-triol. The enzyme catalyses 5,6beta-epoxy-5beta-cholestan-3beta-ol + H2O = 5alpha-cholestane-3beta,5,6beta-triol. The protein operates within steroid biosynthesis; cholesterol biosynthesis. Oxidoreductase that catalyzes the last step of the cholesterol synthesis pathway, which transforms cholesta-5,7-dien-3beta-ol (7-dehydrocholesterol,7-DHC) into cholesterol by reducing the C7-C8 double bond of its sterol core. Can also metabolize cholesta-5,7,24-trien-3beta-ol (7-dehydrodemosterol, 7-DHD) to desmosterol, which is then metabolized by the Delta(24)-sterol reductase (DHCR24) to cholesterol. Modulates ferroptosis (a form of regulated cell death driven by iron-dependent lipid peroxidation) through the metabolic breakdown of the anti-ferroptotic metabolites 7-DHC and 7-DHD which, when accumulated, divert the propagation of peroxyl radical-mediated damage from phospholipid components to its sterol core, protecting plasma and mitochondrial membranes from phospholipid autoxidation. Its function is as follows. Component of the microsomal antiestrogen binding site (AEBS), a multiproteic complex at the ER membrane that consists of an association between cholestenol Delta-isomerase/EBP and DHCR7. This complex is responsible for cholesterol-5,6-epoxide hydrolase (ChEH) activity, which consists in the hydration of cholesterol-5,6-epoxides (5,6-EC) into cholestane-3beta,5alpha,6beta-triol (CT). The precise role of each component of this complex has not been described yet. The chain is 7-dehydrocholesterol reductase (Dhcr7) from Rattus norvegicus (Rat).